Here is a 309-residue protein sequence, read N- to C-terminus: tRNA dimethylallyltransferase (309 aa).

ATP is bound at residue 10–17; that stretch reads GPTASGKT. 12 to 17 lines the substrate pocket; that stretch reads TASGKT. Interaction with substrate tRNA stretches follow at residues 35-38 and 240-245; these read DSAL and RCVGYR.

Belongs to the IPP transferase family. As to quaternary structure, monomer. It depends on Mg(2+) as a cofactor.

The catalysed reaction is adenosine(37) in tRNA + dimethylallyl diphosphate = N(6)-dimethylallyladenosine(37) in tRNA + diphosphate. Functionally, catalyzes the transfer of a dimethylallyl group onto the adenine at position 37 in tRNAs that read codons beginning with uridine, leading to the formation of N6-(dimethylallyl)adenosine (i(6)A). The sequence is that of tRNA dimethylallyltransferase from Baumannia cicadellinicola subsp. Homalodisca coagulata.